The sequence spans 251 residues: Triosephosphate isomerase (251 aa).

Position 9-11 (9-11) interacts with substrate; that stretch reads NWK. Residue His94 is the Electrophile of the active site. Residue Glu166 is the Proton acceptor of the active site. Residues Gly172, Ser211, and 232–233 each bind substrate; that span reads GG.

This sequence belongs to the triosephosphate isomerase family. Homodimer.

Its subcellular location is the cytoplasm. It carries out the reaction D-glyceraldehyde 3-phosphate = dihydroxyacetone phosphate. Its pathway is carbohydrate biosynthesis; gluconeogenesis. The protein operates within carbohydrate degradation; glycolysis; D-glyceraldehyde 3-phosphate from glycerone phosphate: step 1/1. Its function is as follows. Involved in the gluconeogenesis. Catalyzes stereospecifically the conversion of dihydroxyacetone phosphate (DHAP) to D-glyceraldehyde-3-phosphate (G3P). The sequence is that of Triosephosphate isomerase from Stenotrophomonas maltophilia (strain R551-3).